A 163-amino-acid chain; its full sequence is NADH-quinone oxidoreductase subunit I (163 aa).

4Fe-4S ferredoxin-type domains follow at residues 53 to 83 (LRRY…IEAG) and 94 to 123 (VRYD…EGPN). [4Fe-4S] cluster contacts are provided by Cys-63, Cys-66, Cys-69, Cys-73, Cys-103, Cys-106, Cys-109, and Cys-113.

Belongs to the complex I 23 kDa subunit family. NDH-1 is composed of 14 different subunits. Subunits NuoA, H, J, K, L, M, N constitute the membrane sector of the complex. The cofactor is [4Fe-4S] cluster.

It is found in the cell inner membrane. The catalysed reaction is a quinone + NADH + 5 H(+)(in) = a quinol + NAD(+) + 4 H(+)(out). Functionally, NDH-1 shuttles electrons from NADH, via FMN and iron-sulfur (Fe-S) centers, to quinones in the respiratory chain. The immediate electron acceptor for the enzyme in this species is believed to be ubiquinone. Couples the redox reaction to proton translocation (for every two electrons transferred, four hydrogen ions are translocated across the cytoplasmic membrane), and thus conserves the redox energy in a proton gradient. The protein is NADH-quinone oxidoreductase subunit I of Bartonella quintana (strain Toulouse) (Rochalimaea quintana).